The following is a 176-amino-acid chain: MTTTTEFPSATAKARFVRVSPRKARRVIDLVRGRSVSDALDILRWAPQAASEPVAKVIASAAANAQNNNGLDPATLIVATVYADEGPTAKRIRPRAQGRAFRIRKRTSHITVVVESRPSKDQRSSKSSRARRAEGSKAAATAPAKKSSASKAPAKKAATKAESKTSEISEAKGGSD.

The disordered stretch occupies residues V113 to D176. Residues S136–A152 are compositionally biased toward low complexity. Over residues T159–D176 the composition is skewed to basic and acidic residues.

Belongs to the universal ribosomal protein uL22 family. As to quaternary structure, part of the 50S ribosomal subunit.

Functionally, this protein binds specifically to 23S rRNA; its binding is stimulated by other ribosomal proteins, e.g. L4, L17, and L20. It is important during the early stages of 50S assembly. It makes multiple contacts with different domains of the 23S rRNA in the assembled 50S subunit and ribosome. Its function is as follows. The globular domain of the protein is located near the polypeptide exit tunnel on the outside of the subunit, while an extended beta-hairpin is found that lines the wall of the exit tunnel in the center of the 70S ribosome. The chain is Large ribosomal subunit protein uL22 from Mycobacterium ulcerans (strain Agy99).